A 145-amino-acid polypeptide reads, in one-letter code: Protein ImpA (145 aa).

Residues S64 and K101 each act as for autocatalytic cleavage activity in the active site.

It belongs to the peptidase S24 family.

Its function is as follows. Involved in UV protection and mutation. This is Protein ImpA from Escherichia coli.